The sequence spans 327 residues: Nitrogenase iron protein (327 aa).

Residues 1-37 are PEST-like; not found in other NifH; it reads MGRNSQGFLTTIRIIVTSATDQPSNFIHSLSNKREST. 45–52 lines the ATP pocket; sequence GKGGIGKS. Cys-132 is a binding site for [4Fe-4S] cluster. An ADP-ribosylarginine; by dinitrogenase reductase ADP-ribosyltransferase modification is found at Arg-135. Cys-166 serves as a coordination point for [4Fe-4S] cluster.

It belongs to the NifH/BchL/ChlL family. In terms of assembly, homodimer. The cofactor is [4Fe-4S] cluster. Post-translationally, the reversible ADP-ribosylation of Arg-135 inactivates the nitrogenase reductase and regulates nitrogenase activity.

The catalysed reaction is N2 + 8 reduced [2Fe-2S]-[ferredoxin] + 16 ATP + 16 H2O = H2 + 8 oxidized [2Fe-2S]-[ferredoxin] + 2 NH4(+) + 16 ADP + 16 phosphate + 6 H(+). The key enzymatic reactions in nitrogen fixation are catalyzed by the nitrogenase complex, which has 2 components: the iron protein and the molybdenum-iron protein. The chain is Nitrogenase iron protein (nifH) from Crocosphaera subtropica (strain ATCC 51142 / BH68) (Cyanothece sp. (strain ATCC 51142)).